We begin with the raw amino-acid sequence, 292 residues long: MSLIDWFAARRKDQFVGKVSQDPEESDGLWVKCSECGQVAYRKDLISNFNVCSNCGHHNRINSDERINIIADKDSFKEFDESLSPTDPLKFKDRRSYSERIKESQQGTGLKDGVITGLCSVNSMPLALAVMDFRFMGGSMGSVVGEKITRIVETATIKNYPILIVCASGGARMQEGMLSLMQMAKISGALKKHRAKNLLYMPLLTHPTTGGVTASFAMLGDLILAEPKALIGFAGRRVIEQTLREKLPDNFQTAEYLLEHGFVDVIVNRKELKSTLTKLLKIHGVKELVQTN.

A CoA carboxyltransferase N-terminal domain is found at 29-292 (LWVKCSECGQ…HGVKELVQTN (264 aa)). Zn(2+) contacts are provided by Cys-33, Cys-36, Cys-52, and Cys-55. The C4-type zinc finger occupies 33–55 (CSECGQVAYRKDLISNFNVCSNC).

Belongs to the AccD/PCCB family. Acetyl-CoA carboxylase is a heterohexamer composed of biotin carboxyl carrier protein (AccB), biotin carboxylase (AccC) and two subunits each of ACCase subunit alpha (AccA) and ACCase subunit beta (AccD). The cofactor is Zn(2+).

Its subcellular location is the cytoplasm. The enzyme catalyses N(6)-carboxybiotinyl-L-lysyl-[protein] + acetyl-CoA = N(6)-biotinyl-L-lysyl-[protein] + malonyl-CoA. It participates in lipid metabolism; malonyl-CoA biosynthesis; malonyl-CoA from acetyl-CoA: step 1/1. Functionally, component of the acetyl coenzyme A carboxylase (ACC) complex. Biotin carboxylase (BC) catalyzes the carboxylation of biotin on its carrier protein (BCCP) and then the CO(2) group is transferred by the transcarboxylase to acetyl-CoA to form malonyl-CoA. The polypeptide is Acetyl-coenzyme A carboxylase carboxyl transferase subunit beta (Prochlorococcus marinus subsp. pastoris (strain CCMP1986 / NIES-2087 / MED4)).